The sequence spans 238 residues: Nicotinamide/nicotinic acid mononucleotide adenylyltransferase (238 aa).

NAD(+) contacts are provided by Ser29 and Phe30. His37 and Lys70 together coordinate ATP. The NAD(+) site is built by Thr107, Gly136, Asp138, Trp149, Arg168, and Asn199. 204-205 (SR) provides a ligand contact to ATP.

It belongs to the eukaryotic NMN adenylyltransferase family. A divalent metal cation is required as a cofactor.

Its subcellular location is the nucleus. It catalyses the reaction beta-nicotinamide D-ribonucleotide + ATP + H(+) = diphosphate + NAD(+). It carries out the reaction nicotinate beta-D-ribonucleotide + ATP + H(+) = deamido-NAD(+) + diphosphate. Its pathway is cofactor biosynthesis; NAD(+) biosynthesis; deamido-NAD(+) from nicotinate D-ribonucleotide: step 1/1. It participates in cofactor biosynthesis; NAD(+) biosynthesis; NAD(+) from nicotinamide D-ribonucleotide: step 1/1. In terms of biological role, catalyzes the formation of NAD(+) from nicotinamide mononucleotide (NMN) and ATP. Can also use the deamidated form; nicotinic acid mononucleotide (NaMN) as substrate. In Arabidopsis thaliana (Mouse-ear cress), this protein is Nicotinamide/nicotinic acid mononucleotide adenylyltransferase (NMNAT).